Here is a 264-residue protein sequence, read N- to C-terminus: Protein-L-isoaspartate O-methyltransferase (264 aa).

A disordered region spans residues methionine 1–alanine 49. Over residues proline 24–threonine 35 the composition is skewed to polar residues. Serine 112 is a catalytic residue.

This sequence belongs to the methyltransferase superfamily. L-isoaspartyl/D-aspartyl protein methyltransferase family.

It localises to the cytoplasm. It carries out the reaction [protein]-L-isoaspartate + S-adenosyl-L-methionine = [protein]-L-isoaspartate alpha-methyl ester + S-adenosyl-L-homocysteine. In terms of biological role, catalyzes the methyl esterification of L-isoaspartyl residues in peptides and proteins that result from spontaneous decomposition of normal L-aspartyl and L-asparaginyl residues. It plays a role in the repair and/or degradation of damaged proteins. This chain is Protein-L-isoaspartate O-methyltransferase, found in Bordetella avium (strain 197N).